Here is a 226-residue protein sequence, read N- to C-terminus: Chalcone--flavanone isomerase 1B-1 (226 aa).

Substrate is bound by residues Thr50, Asn115, and Thr192.

This sequence belongs to the chalcone isomerase family.

The enzyme catalyses a chalcone = a flavanone.. The protein operates within secondary metabolite biosynthesis; flavonoid biosynthesis. In terms of biological role, catalyzes the intramolecular cyclization of bicyclic chalcones into tricyclic (S)-flavanones. Responsible for the isomerization of 4,2',4',6'-tetrahydroxychalcone (also termed chalcone) into naringenin. In Glycine max (Soybean), this protein is Chalcone--flavanone isomerase 1B-1 (CHI1B1).